An 807-amino-acid polypeptide reads, in one-letter code: 1,4-alpha-glucan branching enzyme GlgB (807 aa).

D405 functions as the Nucleophile in the catalytic mechanism. E458 acts as the Proton donor in catalysis.

The protein belongs to the glycosyl hydrolase 13 family. GlgB subfamily. As to quaternary structure, monomer.

It carries out the reaction Transfers a segment of a (1-&gt;4)-alpha-D-glucan chain to a primary hydroxy group in a similar glucan chain.. The protein operates within glycan biosynthesis; glycogen biosynthesis. Catalyzes the formation of the alpha-1,6-glucosidic linkages in glycogen by scission of a 1,4-alpha-linked oligosaccharide from growing alpha-1,4-glucan chains and the subsequent attachment of the oligosaccharide to the alpha-1,6 position. This chain is 1,4-alpha-glucan branching enzyme GlgB, found in Histophilus somni (strain 129Pt) (Haemophilus somnus).